The following is a 349-amino-acid chain: MKNIKTMTMEWTGNSLILIDQRYLPIEEKYVECQNYLDVANSIKDMVVRGAPAIGATAAFGFVLGAKEFSYLSDKNLFSNKLEEVKNSLSKTRPTAVNLFWALNRMDKILKDNLPTKEINDLVTILEEEALKIAYEDIEINKQIGKNGEALLNDGDTVLTHCNAGALATVDYGTALGVIRAAVENGKDIQVYADETRPYLQGARLTVWELVKSGIKTTLITDNMAGWVMKQGKINAVIVGADRIARNGDVANKIGTYSVAVLAKRHGIPFYVAAPLSTIDIETKNGEGIPIEERNHNEVRFCHKTRLVTDDVNIYNPAFDVTPNELVTAIITEKMVIRPPYEINIVKLF.

Substrate is bound by residues 49-51, arginine 93, and glutamine 201; that span reads RGA. Catalysis depends on aspartate 242, which acts as the Proton donor. 252–253 serves as a coordination point for substrate; that stretch reads NK.

This sequence belongs to the EIF-2B alpha/beta/delta subunits family. MtnA subfamily.

The enzyme catalyses 5-(methylsulfanyl)-alpha-D-ribose 1-phosphate = 5-(methylsulfanyl)-D-ribulose 1-phosphate. It functions in the pathway amino-acid biosynthesis; L-methionine biosynthesis via salvage pathway; L-methionine from S-methyl-5-thio-alpha-D-ribose 1-phosphate: step 1/6. Catalyzes the interconversion of methylthioribose-1-phosphate (MTR-1-P) into methylthioribulose-1-phosphate (MTRu-1-P). The chain is Methylthioribose-1-phosphate isomerase from Petrotoga mobilis (strain DSM 10674 / SJ95).